Here is a 677-residue protein sequence, read N- to C-terminus: Methionine--tRNA ligase (677 aa).

A 'HIGH' region motif is present at residues 15-25 (PYANGSIHLGH). Residues Cys-146, Cys-149, Cys-159, and Cys-162 each contribute to the Zn(2+) site. The 'KMSKS' region signature appears at 333 to 337 (KMSKS). Position 336 (Lys-336) interacts with ATP. Residues 575–677 (DFAKIDLRVA…DGAKPGQQVK (103 aa)) enclose the tRNA-binding domain.

Belongs to the class-I aminoacyl-tRNA synthetase family. MetG type 1 subfamily. In terms of assembly, homodimer. It depends on Zn(2+) as a cofactor.

Its subcellular location is the cytoplasm. It catalyses the reaction tRNA(Met) + L-methionine + ATP = L-methionyl-tRNA(Met) + AMP + diphosphate. Is required not only for elongation of protein synthesis but also for the initiation of all mRNA translation through initiator tRNA(fMet) aminoacylation. The sequence is that of Methionine--tRNA ligase from Salmonella paratyphi A (strain AKU_12601).